The sequence spans 383 residues: 8-amino-7-oxononanoate synthase (383 aa).

R20 contacts substrate. Residue G107–Y108 coordinates pyridoxal 5'-phosphate. Substrate is bound at residue H132. Pyridoxal 5'-phosphate-binding residues include S178, H206, and T233. K236 is subject to N6-(pyridoxal phosphate)lysine. T349 serves as a coordination point for substrate.

This sequence belongs to the class-II pyridoxal-phosphate-dependent aminotransferase family. BioF subfamily. Homodimer. Requires pyridoxal 5'-phosphate as cofactor.

The catalysed reaction is 6-carboxyhexanoyl-[ACP] + L-alanine + H(+) = (8S)-8-amino-7-oxononanoate + holo-[ACP] + CO2. It functions in the pathway cofactor biosynthesis; biotin biosynthesis. Its function is as follows. Catalyzes the decarboxylative condensation of pimeloyl-[acyl-carrier protein] and L-alanine to produce 8-amino-7-oxononanoate (AON), [acyl-carrier protein], and carbon dioxide. This chain is 8-amino-7-oxononanoate synthase, found in Chromobacterium violaceum (strain ATCC 12472 / DSM 30191 / JCM 1249 / CCUG 213 / NBRC 12614 / NCIMB 9131 / NCTC 9757 / MK).